A 227-amino-acid chain; its full sequence is Cytochrome c oxidase subunit 2 (227 aa).

At 1-22 (MAYPFQLGLQDATSPIMEELMN) the chain is on the mitochondrial intermembrane side. A helical transmembrane segment spans residues 23–44 (FHDHTLMIVFLISSLVLYIISL). At 45–60 (MLTTKLTHTSTMDAQE) the chain is on the mitochondrial matrix side. A helical membrane pass occupies residues 61–81 (VETIWTILPAVILIMIALPSL). The Mitochondrial intermembrane segment spans residues 82–227 (RILYMMDEIN…YFENWSASMI (146 aa)). 6 residues coordinate Cu cation: His-161, Cys-196, Glu-198, Cys-200, His-204, and Met-207. Mg(2+) is bound at residue Glu-198. Tyr-218 carries the post-translational modification Phosphotyrosine.

It belongs to the cytochrome c oxidase subunit 2 family. As to quaternary structure, component of the cytochrome c oxidase (complex IV, CIV), a multisubunit enzyme composed of 14 subunits. The complex is composed of a catalytic core of 3 subunits MT-CO1, MT-CO2 and MT-CO3, encoded in the mitochondrial DNA, and 11 supernumerary subunits COX4I, COX5A, COX5B, COX6A, COX6B, COX6C, COX7A, COX7B, COX7C, COX8 and NDUFA4, which are encoded in the nuclear genome. The complex exists as a monomer or a dimer and forms supercomplexes (SCs) in the inner mitochondrial membrane with NADH-ubiquinone oxidoreductase (complex I, CI) and ubiquinol-cytochrome c oxidoreductase (cytochrome b-c1 complex, complex III, CIII), resulting in different assemblies (supercomplex SCI(1)III(2)IV(1) and megacomplex MCI(2)III(2)IV(2)). Found in a complex with TMEM177, COA6, COX18, COX20, SCO1 and SCO2. Interacts with TMEM177 in a COX20-dependent manner. Interacts with COX20. Interacts with COX16. Cu cation is required as a cofactor.

The protein resides in the mitochondrion inner membrane. It catalyses the reaction 4 Fe(II)-[cytochrome c] + O2 + 8 H(+)(in) = 4 Fe(III)-[cytochrome c] + 2 H2O + 4 H(+)(out). Component of the cytochrome c oxidase, the last enzyme in the mitochondrial electron transport chain which drives oxidative phosphorylation. The respiratory chain contains 3 multisubunit complexes succinate dehydrogenase (complex II, CII), ubiquinol-cytochrome c oxidoreductase (cytochrome b-c1 complex, complex III, CIII) and cytochrome c oxidase (complex IV, CIV), that cooperate to transfer electrons derived from NADH and succinate to molecular oxygen, creating an electrochemical gradient over the inner membrane that drives transmembrane transport and the ATP synthase. Cytochrome c oxidase is the component of the respiratory chain that catalyzes the reduction of oxygen to water. Electrons originating from reduced cytochrome c in the intermembrane space (IMS) are transferred via the dinuclear copper A center (CU(A)) of subunit 2 and heme A of subunit 1 to the active site in subunit 1, a binuclear center (BNC) formed by heme A3 and copper B (CU(B)). The BNC reduces molecular oxygen to 2 water molecules using 4 electrons from cytochrome c in the IMS and 4 protons from the mitochondrial matrix. This chain is Cytochrome c oxidase subunit 2 (Mtco2), found in Mus musculus (Mouse).